The sequence spans 311 residues: Heme A synthase (311 aa).

Over 1–6 (MQRFIK) the chain is Cytoplasmic. The chain crosses the membrane as a helical span at residues 7-27 (WLAVITSLDLLIVLLGGALVT). At 28-62 (KTGSGQGCGKSWPLCNGEFVPSNLSMETIIELSHR) the chain is on the extracellular side. The cysteines at positions 35 and 42 are disulfide-linked. Residue glutamate 58 is part of the active site. Heme o is bound at residue histidine 61. Residues 63-83 (LTSGSAGILVTLLCILSWKYY) traverse the membrane as a helical segment. Residues 84–91 (KHVRETKT) are Cytoplasmic-facing. A helical transmembrane segment spans residues 92-112 (LAILSFVFLVAQALMGAAAVV). The Extracellular segment spans residues 113–121 (WGQMPAVLA). A helical transmembrane segment spans residues 122-142 (IHFGISLISFASVILLTCLIF). Histidine 123 serves as a coordination point for heme o. The Cytoplasmic portion of the chain corresponds to 143 to 159 (EIDQKFDARSLIMDKKM). A helical membrane pass occupies residues 160–180 (KFHIYGVTIYSYIVVYTGALV). The Extracellular segment spans residues 181–211 (RHERASLACPDFPLCSKNRPMPTQLHEWVQM). A disulfide bond links cysteine 189 and cysteine 195. The helical transmembrane segment at 212–232 (GHRVAAMLIFAWILYAMILAI) threads the bilayer. Histidine 213 contributes to the heme b binding site. Over 233–243 (RHYKQQPVVYW) the chain is Cytoplasmic. The helical transmembrane segment at 244 to 264 (GWIISFILVTLQAIVGILVVF) threads the bilayer. The Extracellular portion of the chain corresponds to 265–271 (TNASLSM). The helical transmembrane segment at 272–292 (ALLHSLFISCLFAVLCYLVML) threads the bilayer. Histidine 275 lines the heme b pocket. Residues 293–311 (GTRSKVNAKEAASTSKQTK) lie on the Cytoplasmic side of the membrane.

Belongs to the COX15/CtaA family. Type 1 subfamily. In terms of assembly, interacts with CtaB. The cofactor is heme b.

It localises to the cell membrane. The enzyme catalyses Fe(II)-heme o + 2 A + H2O = Fe(II)-heme a + 2 AH2. It functions in the pathway porphyrin-containing compound metabolism; heme A biosynthesis; heme A from heme O: step 1/1. Functionally, catalyzes the conversion of heme O to heme A by two successive hydroxylations of the methyl group at C8. The first hydroxylation forms heme I, the second hydroxylation results in an unstable dihydroxymethyl group, which spontaneously dehydrates, resulting in the formyl group of heme A. The polypeptide is Heme A synthase (Bacillus cereus (strain ATCC 10987 / NRS 248)).